The following is a 311-amino-acid chain: Putative ABC transporter ATP-binding protein MG467 (311 aa).

In terms of domain architecture, ABC transporter spans 84-310 (ITINKMWKNV…IVSNQLVRPL (227 aa)). Residue 122–129 (GSSGSGKT) participates in ATP binding.

This sequence belongs to the ABC transporter superfamily.

The chain is Putative ABC transporter ATP-binding protein MG467 from Mycoplasma genitalium (strain ATCC 33530 / DSM 19775 / NCTC 10195 / G37) (Mycoplasmoides genitalium).